The sequence spans 332 residues: Probable thc operon regulatory protein (332 aa).

In terms of domain architecture, HTH araC/xylS-type spans 227 to 328; sequence RLAVDYLEAH…GVSPSEDLRT (102 aa). 2 DNA-binding regions (H-T-H motif) span residues 244 to 265 and 295 to 318; these read AQVARNVGVSVRSLQVGFQNSL and VTEIAQRWGFLHVGRFAGEYKQTF.

Probably involved in the positive regulation of the thc operon for the degradation of the thiocarbamate herbicide EPTC. The chain is Probable thc operon regulatory protein (thcR) from Rhodococcus erythropolis (Arthrobacter picolinophilus).